Consider the following 1558-residue polypeptide: ABC transporter NFT1 (1558 aa).

At 1-29 the chain is on the extracellular side; it reads MIKNGTCPFWERDDLSECARREYIEFKFP. N-linked (GlcNAc...) asparagine glycosylation occurs at Asn-4. The helical transmembrane segment at 30-50 threads the bilayer; that stretch reads LFILLTGMIYAFCKVFRAFYL. At 51–103 the chain is on the cytoplasmic side; the sequence is RRKNHTNEAPEFEEQGNGNHEYARFSVLRLKSAWESRSFCNVNNRSTFDKFKK. A helical membrane pass occupies residues 104–124; it reads FIEGAFIVLQLTIHLYILSNM. Over 125–130 the chain is Extracellular; the sequence is PMDNKK. The chain crosses the membrane as a helical span at residues 131 to 151; the sequence is FFHQGFLVQMFLWILLLVVIT. The Cytoplasmic segment spans residues 152 to 169; that stretch reads LRLISASQSFRWVLACKR. A helical membrane pass occupies residues 170–190; sequence DLWAVSFYSYASLFTLSILPL. At 191 to 201 the chain is on the extracellular side; that stretch reads RSVFIGKIKDK. Residues 202-222 traverse the membrane as a helical segment; that stretch reads IMVKYIISETFIDLALLLLLS. The Cytoplasmic segment spans residues 223-302; sequence TSSIEGTRYS…SSKKGRLLPN (80 aa). A helical membrane pass occupies residues 303–323; it reads IICYFKAVFISQLFLAFVSSF. Positions 311-621 constitute an ABC transmembrane type-1 1 domain; it reads FISQLFLAFV…IASTVSLLIQ (311 aa). Over 324–351 the chain is Extracellular; sequence LNFVPSLLMPRILSYVNDPKSQSWNLVS. Residues 352–374 traverse the membrane as a helical segment; the sequence is LYVSSMLVSKIIATTCRGQGLFL. Residues 375–449 lie on the Cytoplasmic side of the membrane; sequence GEKGTMQLRT…VMSIDAFKVS (75 aa). The disordered stretch occupies residues 410–434; it reads NASTSFEENPDSSEAEPRKKSSRKD. Residues 424–434 show a composition bias toward basic and acidic residues; the sequence is AEPRKKSSRKD. The chain crosses the membrane as a helical span at residues 450 to 470; the sequence is EAMNTFYLACEAVFMTVTALM. Residues 471–481 lie on the Extracellular side of the membrane; that stretch reads ILYSLLGWSAF. Residues 482–504 form a helical membrane-spanning segment; sequence AGTFALLAMIPLNFWCATFYGNY. At 505 to 558 the chain is on the cytoplasmic side; sequence QADQLILTDKRTSGISEALNSIRVIKLLAWENLFYQKIINVRDGEIRLLKKKAT. Residues 559 to 579 traverse the membrane as a helical segment; that stretch reads IFFLNHLIWFFGPTLVSAITF. Over 580–584 the chain is Extracellular; it reads SVFIK. The chain crosses the membrane as a helical span at residues 585–605; sequence FQNQTLTPTIAFTALSLFAIL. The Cytoplasmic segment spans residues 606-953; the sequence is RTPMDQIAST…KFSAYKWLAD (348 aa). Residues 651-892 enclose the ABC transporter 1 domain; the sequence is FGFEDASMEW…NEFLRESINN (242 aa). 686-693 contacts ATP; that stretch reads GPTGSGKS. Residues 892 to 901 are compositionally biased toward polar residues; it reads NDSKNTTHNQ. Residues 892–926 are disordered; the sequence is NDSKNTTHNQIDLKRSTTSKKTKNGDPEGENSQDE. The helical transmembrane segment at 954–974 threads the bilayer; it reads YFGGLGVVFVFTSSAILIHGI. The region spanning 961 to 1251 is the ABC transmembrane type-1 2 domain; that stretch reads VFVFTSSAIL…IIKVFSSVEL (291 aa). Over 975–1013 the chain is Extracellular; it reads TLSQGFWLRYWLETGSSGSKSTWLYRIVEGHSNIYFILT. Residues 1014–1034 form a helical membrane-spanning segment; sequence YIVIGFVSSFLTSGKVWIAII. At 1035-1082 the chain is on the cytoplasmic side; it reads SGTNVTKKIFAKLLSSILYAKLRFHNVTPTGRIMNRFSKDMDIIDQQL. A helical transmembrane segment spans residues 1083-1105; it reads IPNFEGLSYSVVVCLWIILLIGY. The Extracellular segment spans residues 1106–1109; the sequence is VTPQ. A helical transmembrane segment spans residues 1110–1132; the sequence is FLLFAIPLCALYYTVCTLYLRAS. Residues 1133–1199 lie on the Cytoplasmic side of the membrane; that stretch reads RELKRIDNIN…ATEWITYRVD (67 aa). A helical membrane pass occupies residues 1200-1220; the sequence is IIGTLVLFSSSVMIIMKASYL. The Extracellular segment spans residues 1221–1222; the sequence is DA. A helical membrane pass occupies residues 1223-1243; the sequence is GLAGILLSNAFSFTETAQWII. The Cytoplasmic segment spans residues 1244–1558; that stretch reads KVFSSVELLM…LAKVSFDNKR (315 aa). Positions 1285–1538 constitute an ABC transporter 2 domain; that stretch reads VELKNLSLRY…RNTIFYRLCR (254 aa). 1319–1326 is a binding site for ATP; the sequence is GRTGAGKS.

The protein belongs to the ABC transporter superfamily. ABCC family. Conjugate transporter (TC 3.A.1.208) subfamily.

The protein resides in the membrane. The chain is ABC transporter NFT1 (NFT1) from Saccharomyces cerevisiae (strain YJM789) (Baker's yeast).